Here is a 273-residue protein sequence, read N- to C-terminus: Pre-mRNA-splicing factor CWC23 (273 aa).

Residues Asp-15–Leu-87 form the J domain.

This sequence belongs to the DnaJ family. Associated with the spliceosome.

The protein resides in the cytoplasm. It is found in the nucleus. Functionally, involved in pre-mRNA splicing. May be involved in endoplasmic reticulum-associated protein degradation (ERAD) and required for growth at low and high temperatures. The chain is Pre-mRNA-splicing factor CWC23 (CWC23) from Eremothecium gossypii (strain ATCC 10895 / CBS 109.51 / FGSC 9923 / NRRL Y-1056) (Yeast).